The sequence spans 91 residues: Small ribosomal subunit protein uS15 (91 aa).

Belongs to the universal ribosomal protein uS15 family. As to quaternary structure, part of the 30S ribosomal subunit. Forms a bridge to the 50S subunit in the 70S ribosome, contacting the 23S rRNA.

One of the primary rRNA binding proteins, it binds directly to 16S rRNA where it helps nucleate assembly of the platform of the 30S subunit by binding and bridging several RNA helices of the 16S rRNA. Its function is as follows. Forms an intersubunit bridge (bridge B4) with the 23S rRNA of the 50S subunit in the ribosome. In Legionella pneumophila (strain Paris), this protein is Small ribosomal subunit protein uS15.